Consider the following 176-residue polypeptide: Acireductone dioxygenase (176 aa).

4 residues coordinate Fe(2+): histidine 100, histidine 102, glutamate 106, and histidine 145. Ni(2+)-binding residues include histidine 100, histidine 102, glutamate 106, and histidine 145.

Belongs to the acireductone dioxygenase (ARD) family. Monomer. Requires Fe(2+) as cofactor. Ni(2+) serves as cofactor.

The enzyme catalyses 1,2-dihydroxy-5-(methylsulfanyl)pent-1-en-3-one + O2 = 3-(methylsulfanyl)propanoate + CO + formate + 2 H(+). It catalyses the reaction 1,2-dihydroxy-5-(methylsulfanyl)pent-1-en-3-one + O2 = 4-methylsulfanyl-2-oxobutanoate + formate + 2 H(+). It participates in amino-acid biosynthesis; L-methionine biosynthesis via salvage pathway; L-methionine from S-methyl-5-thio-alpha-D-ribose 1-phosphate: step 5/6. Functionally, catalyzes 2 different reactions between oxygen and the acireductone 1,2-dihydroxy-3-keto-5-methylthiopentene (DHK-MTPene) depending upon the metal bound in the active site. Fe-containing acireductone dioxygenase (Fe-ARD) produces formate and 2-keto-4-methylthiobutyrate (KMTB), the alpha-ketoacid precursor of methionine in the methionine recycle pathway. Ni-containing acireductone dioxygenase (Ni-ARD) produces methylthiopropionate, carbon monoxide and formate, and does not lie on the methionine recycle pathway. In Bacillus pumilus (strain SAFR-032), this protein is Acireductone dioxygenase.